A 600-amino-acid chain; its full sequence is Repressor of filamentous growth 1 (600 aa).

Residues 1-14 show a composition bias toward polar residues; that stretch reads MSTAIYYSTHNNMH. Disordered stretches follow at residues 1-59, 112-160, 180-200, 266-337, 427-549, and 564-600; these read MSTA…NSAN, NGGY…TDIS, GIDG…NNNN, AEEE…SRDN, STTS…GYDN, and QQGL…QPPQ. 2 stretches are compositionally biased toward low complexity: residues 20–39 and 47–59; these read TNGS…SNPN and INNN…NSAN. Positions 131 to 160 are enriched in polar residues; that stretch reads FDTSYSNQTTPTSAYTNFNNDSTHSPTDIS. A compositionally biased stretch (low complexity) spans 188-200; sequence NNNNNNNNNNNNN. The segment at residues 212–281 is a DNA-binding region (HMG box); it reads IPRPRNAFIL…NHAKKYPGYR (70 aa). Positions 272–289 are enriched in basic residues; the sequence is NHAKKYPGYRYTPRRNGR. Residues 297–312 are compositionally biased toward low complexity; that stretch reads KNKPLPNNKSNSISGM. Over residues 313–322 the composition is skewed to gly residues; that stretch reads SGSGGGGGSI. Low complexity predominate over residues 427-470; it reads STTSTTAPTTTTTTTTNASSIGLSVPPTATTTSTSSQPTSANSQ. Residues 481–496 show a composition bias toward polar residues; the sequence is PVSSTHHQSSISEIAA. Positions 497–506 are enriched in low complexity; that stretch reads QQQQQQQQQQ. The segment covering 507–547 has biased composition (polar residues); that stretch reads FMYNTNYSTIPPNNTTTMQQHSAGTGNDYSLNGNNSGNTGY. 2 stretches are compositionally biased toward low complexity: residues 564 to 574 and 581 to 600; these read QQGLQVQQQGQ and HAAQ…QPPQ.

The protein resides in the nucleus. Its function is as follows. Transcription regulator that functions in both the positive and negative regulation of filamentous growth, depending upon the environmental conditions. Recruits the TUP1/SSN6 general repression complex to achieve repression. Regulates genes encoding cell wall components that are specifically expressed in the filamentous forms such as HWP1, RBT1, HYR1, ECE1, ALS1, RBT4 and RBT5. The chain is Repressor of filamentous growth 1 (RFG1) from Candida albicans (strain SC5314 / ATCC MYA-2876) (Yeast).